We begin with the raw amino-acid sequence, 373 residues long: Saccharopine dehydrogenase [NAD(+), L-lysine-forming] (373 aa).

Ala-2 bears the N-acetylalanine; partial mark. Residues Arg-18 and Lys-77 each coordinate L-saccharopine. Lys-77 serves as the catalytic Proton acceptor. His-96 functions as the Proton donor in the catalytic mechanism. An L-saccharopine-binding site is contributed by Gln-101. Arg-130 contributes to the NAD(+) binding site. L-saccharopine-binding residues include Arg-131 and Phe-135. NAD(+)-binding positions include 203–204 (GR), Asp-227, Thr-231, Tyr-251, and Val-278. Cys-205 and Cys-249 are oxidised to a cystine. 279–281 (SAD) is a binding site for L-saccharopine. An NAD(+)-binding site is contributed by 318–321 (IDHL). A Microbody targeting signal motif is present at residues 371-373 (SRL).

Belongs to the AlaDH/PNT family. In terms of assembly, monomer.

The protein localises to the peroxisome. It carries out the reaction L-saccharopine + NAD(+) + H2O = L-lysine + 2-oxoglutarate + NADH + H(+). It participates in amino-acid biosynthesis; L-lysine biosynthesis via AAA pathway; L-lysine from L-alpha-aminoadipate (fungal route): step 3/3. With respect to regulation, inhibited by p-chloromercuribenzoate and iodoacetate by modification of the active site cysteine residue. Inhibited by diethyl pyrocarbonate by modification of histidine residues. Inhibited by pyridoxal 5'-phosphate by modification of an essential lysine residue. In terms of biological role, catalyzes the NAD(+)-dependent cleavage of saccharopine to L-lysine and 2-oxoglutarate, the final step in the alpha-aminoadipate (AAA) pathway for lysine biosynthesis. This chain is Saccharopine dehydrogenase [NAD(+), L-lysine-forming], found in Saccharomyces cerevisiae (strain ATCC 204508 / S288c) (Baker's yeast).